We begin with the raw amino-acid sequence, 503 residues long: Probable cytosol aminopeptidase (503 aa).

Lys-268 and Asp-273 together coordinate Mn(2+). Residue Lys-280 is part of the active site. Positions 291, 350, and 352 each coordinate Mn(2+). The active site involves Arg-354.

This sequence belongs to the peptidase M17 family. The cofactor is Mn(2+).

It is found in the cytoplasm. The enzyme catalyses Release of an N-terminal amino acid, Xaa-|-Yaa-, in which Xaa is preferably Leu, but may be other amino acids including Pro although not Arg or Lys, and Yaa may be Pro. Amino acid amides and methyl esters are also readily hydrolyzed, but rates on arylamides are exceedingly low.. The catalysed reaction is Release of an N-terminal amino acid, preferentially leucine, but not glutamic or aspartic acids.. Presumably involved in the processing and regular turnover of intracellular proteins. Catalyzes the removal of unsubstituted N-terminal amino acids from various peptides. This is Probable cytosol aminopeptidase from Herminiimonas arsenicoxydans.